Consider the following 403-residue polypeptide: Probable eukaryotic initiation factor 4A (403 aa).

The segment at 1–29 (MAQNDKIAPQDQDSFLDDQPGVRPIPSFD) is disordered. The Q motif signature appears at 26–54 (PSFDDMPLHQNLLRGIYSYGFEKPSSIQQ). The 174-residue stretch at 57–230 (IAPFTRGGDI…KKFMRDPVRI (174 aa)) folds into the Helicase ATP-binding domain. Residue 70 to 77 (AQSGTGKT) coordinates ATP. The DEAD box motif lies at 178-181 (DEAD). The Helicase C-terminal domain occupies 241-401 (GIKQFFIAVE…ELPVDFAAYL (161 aa)).

Belongs to the DEAD box helicase family. eIF4A subfamily. As to quaternary structure, eIF4F is a multi-subunit complex, the composition of which varies with external and internal environmental conditions. It is composed of at least EIF4A, EIF4E and EIF4G.

The enzyme catalyses ATP + H2O = ADP + phosphate + H(+). In terms of biological role, ATP-dependent RNA helicase which is a subunit of the eIF4F complex involved in cap recognition and is required for mRNA binding to ribosome. In the current model of translation initiation, eIF4A unwinds RNA secondary structures in the 5'-UTR of mRNAs which is necessary to allow efficient binding of the small ribosomal subunit, and subsequent scanning for the initiator codon. The sequence is that of Probable eukaryotic initiation factor 4A from Leishmania infantum.